Consider the following 209-residue polypeptide: Orotate phosphoribosyltransferase (209 aa).

5-phospho-alpha-D-ribose 1-diphosphate contacts are provided by residues Arg96, Lys100, His102, and Glu122–Ser130. Ser126 is an orotate binding site.

The protein belongs to the purine/pyrimidine phosphoribosyltransferase family. PyrE subfamily. Homodimer. Mg(2+) is required as a cofactor.

The enzyme catalyses orotidine 5'-phosphate + diphosphate = orotate + 5-phospho-alpha-D-ribose 1-diphosphate. Its pathway is pyrimidine metabolism; UMP biosynthesis via de novo pathway; UMP from orotate: step 1/2. Functionally, catalyzes the transfer of a ribosyl phosphate group from 5-phosphoribose 1-diphosphate to orotate, leading to the formation of orotidine monophosphate (OMP). The sequence is that of Orotate phosphoribosyltransferase from Streptococcus pyogenes serotype M1.